A 291-amino-acid chain; its full sequence is Elongation factor Ts (291 aa).

Positions 80–83 (TDFV) are involved in Mg(2+) ion dislocation from EF-Tu.

This sequence belongs to the EF-Ts family.

Its subcellular location is the cytoplasm. Associates with the EF-Tu.GDP complex and induces the exchange of GDP to GTP. It remains bound to the aminoacyl-tRNA.EF-Tu.GTP complex up to the GTP hydrolysis stage on the ribosome. The sequence is that of Elongation factor Ts from Ligilactobacillus salivarius (strain UCC118) (Lactobacillus salivarius).